The sequence spans 252 residues: Small ribosomal subunit protein uS2 (252 aa).

The tract at residues 231–252 (SVESTAQEQVEETAQEETAVEA) is disordered. Acidic residues predominate over residues 239–252 (QVEETAQEETAVEA).

It belongs to the universal ribosomal protein uS2 family.

The protein is Small ribosomal subunit protein uS2 of Acetivibrio thermocellus (strain ATCC 27405 / DSM 1237 / JCM 9322 / NBRC 103400 / NCIMB 10682 / NRRL B-4536 / VPI 7372) (Clostridium thermocellum).